Consider the following 458-residue polypeptide: Bifunctional protein HldE (458 aa).

Residues 1 to 311 are ribokinase; the sequence is MVNVLVVGDL…ENLKSKKSGF (311 aa). Residue 189–192 coordinates ATP; it reads NKKE. Aspartate 257 is an active-site residue. Residues 333 to 458 are cytidylyltransferase; it reads FTNGCFDILH…TTNIINKIKG (126 aa).

The protein in the N-terminal section; belongs to the carbohydrate kinase PfkB family. It in the C-terminal section; belongs to the cytidylyltransferase family. Homodimer.

It catalyses the reaction D-glycero-beta-D-manno-heptose 7-phosphate + ATP = D-glycero-beta-D-manno-heptose 1,7-bisphosphate + ADP + H(+). It carries out the reaction D-glycero-beta-D-manno-heptose 1-phosphate + ATP + H(+) = ADP-D-glycero-beta-D-manno-heptose + diphosphate. Its pathway is nucleotide-sugar biosynthesis; ADP-L-glycero-beta-D-manno-heptose biosynthesis; ADP-L-glycero-beta-D-manno-heptose from D-glycero-beta-D-manno-heptose 7-phosphate: step 1/4. It functions in the pathway nucleotide-sugar biosynthesis; ADP-L-glycero-beta-D-manno-heptose biosynthesis; ADP-L-glycero-beta-D-manno-heptose from D-glycero-beta-D-manno-heptose 7-phosphate: step 3/4. Catalyzes the phosphorylation of D-glycero-D-manno-heptose 7-phosphate at the C-1 position to selectively form D-glycero-beta-D-manno-heptose-1,7-bisphosphate. Its function is as follows. Catalyzes the ADP transfer from ATP to D-glycero-beta-D-manno-heptose 1-phosphate, yielding ADP-D-glycero-beta-D-manno-heptose. This chain is Bifunctional protein HldE, found in Campylobacter fetus subsp. fetus (strain 82-40).